We begin with the raw amino-acid sequence, 427 residues long: Adenylosuccinate synthetase (427 aa).

Residues 12 to 18 (GDEGKGK) and 40 to 42 (GHT) contribute to the GTP site. Asp13 acts as the Proton acceptor in catalysis. Residues Asp13 and Gly40 each coordinate Mg(2+). Residues 13 to 16 (DEGK), 38 to 41 (NAGH), Thr128, Arg142, Gln223, Thr238, and Arg302 contribute to the IMP site. The active-site Proton donor is His41. Position 298–304 (298–304 (TTTGRPR)) interacts with substrate. GTP contacts are provided by residues Arg304, 330–332 (KLD), and 412–414 (AVG).

It belongs to the adenylosuccinate synthetase family. In terms of assembly, homodimer. The cofactor is Mg(2+).

Its subcellular location is the cytoplasm. The enzyme catalyses IMP + L-aspartate + GTP = N(6)-(1,2-dicarboxyethyl)-AMP + GDP + phosphate + 2 H(+). It functions in the pathway purine metabolism; AMP biosynthesis via de novo pathway; AMP from IMP: step 1/2. Plays an important role in the de novo pathway of purine nucleotide biosynthesis. Catalyzes the first committed step in the biosynthesis of AMP from IMP. This chain is Adenylosuccinate synthetase, found in Heliobacterium modesticaldum (strain ATCC 51547 / Ice1).